The primary structure comprises 121 residues: NADH-quinone oxidoreductase subunit A 1 (121 aa).

Transmembrane regions (helical) follow at residues 11–31 (IAIF…APFA), 65–85 (LVSI…PWAV), and 90–110 (MGWF…VGFI).

It belongs to the complex I subunit 3 family. In terms of assembly, NDH-1 is composed of 14 different subunits. Subunits NuoA, H, J, K, L, M, N constitute the membrane sector of the complex.

The protein localises to the cell inner membrane. The enzyme catalyses a quinone + NADH + 5 H(+)(in) = a quinol + NAD(+) + 4 H(+)(out). NDH-1 shuttles electrons from NADH, via FMN and iron-sulfur (Fe-S) centers, to quinones in the respiratory chain. The immediate electron acceptor for the enzyme in this species is believed to be ubiquinone. Couples the redox reaction to proton translocation (for every two electrons transferred, four hydrogen ions are translocated across the cytoplasmic membrane), and thus conserves the redox energy in a proton gradient. The sequence is that of NADH-quinone oxidoreductase subunit A 1 from Rhizobium meliloti (strain 1021) (Ensifer meliloti).